We begin with the raw amino-acid sequence, 57 residues long: MAVQKSRKTPSRRGMRRSHDALSTTAITVDETTGELHRRHHVTADGYYKGKKVIQDK.

Residues 1–16 (MAVQKSRKTPSRRGMR) show a composition bias toward basic residues. The tract at residues 1–37 (MAVQKSRKTPSRRGMRRSHDALSTTAITVDETTGELH) is disordered. Residues 21–31 (ALSTTAITVDE) show a composition bias toward polar residues.

The protein belongs to the bacterial ribosomal protein bL32 family.

The protein is Large ribosomal subunit protein bL32 of Hydrogenovibrio crunogenus (strain DSM 25203 / XCL-2) (Thiomicrospira crunogena).